The chain runs to 530 residues: Amidase FVEG_08295 (530 aa).

Catalysis depends on charge relay system residues Lys138 and Ser214. Substrate contacts are provided by residues Ser214 and 235 to 238; that span reads IAGS. Ser238 serves as the catalytic Acyl-ester intermediate.

It belongs to the amidase family.

It catalyses the reaction a monocarboxylic acid amide + H2O = a monocarboxylate + NH4(+). Its pathway is xenobiotic degradation. Functionally, amidase; part of the Fusarium detoxification of benzoxazolinone cluster 1 (FDB1) involved in the degradation of benzoxazolinones produced by the host plant. Maize, wheat, and rye produce the 2 benzoxazinone phytoanticipins 2,4-dihy-droxy-7-methoxy-1,4-benzoxazin-3-one (DIMBOA) and 2,4-dihydroxy-1,4-benzoxazin-3-one (DIBOA) that, due to their inherent instability once released, spontaneously degrade to the more stable corresponding benzoxazolinones, 6-methoxy-2-benzoxazolinone (MBOA) and 2-benzoxazolinone (BOA), respectively. The first step in the detoxification of benzoxazolinones involves the hydrolysis of the cyclic ester bond of benzoxazolinones by the FDB1 cluster gamma-lactamase MBL1 to aminophenols. MBL1 is able to convert BOA into 2-aminophenol (2-AP), as well as MBOA into 5-methoxy-2-aminophenol (2-AMP). The FDB2 cluster N-malonyltransferase FDB2/NAT1 then metabolizes aminophenols via N-malonylation to non-toxic malonamic acids. FDB2/NAT1 converts 2-AP into N-(2-hydroxyphenyl) malonamic acid (HPMA) and 2-AMP into N-(2-hydroxy-4-methoxyphenyl) malonamic acid (HMPMA). The duplicated dienlactone hydrolases DLH1 and DLH2 may provide redundant function for hydrolyzing the lactone moiety in the BOA molecule. The roles of the amidases an other enzymes encoded by the 2 FDB clusters have not been identified so far. The chain is Amidase FVEG_08295 from Gibberella moniliformis (strain M3125 / FGSC 7600) (Maize ear and stalk rot fungus).